Consider the following 359-residue polypeptide: Ribosomal RNA large subunit methyltransferase M (359 aa).

Residues S186, 219-222 (CPGG), D238, D258, and D275 each bind S-adenosyl-L-methionine. Catalysis depends on K304, which acts as the Proton acceptor.

The protein belongs to the class I-like SAM-binding methyltransferase superfamily. RNA methyltransferase RlmE family. RlmM subfamily. Monomer.

The protein resides in the cytoplasm. The enzyme catalyses cytidine(2498) in 23S rRNA + S-adenosyl-L-methionine = 2'-O-methylcytidine(2498) in 23S rRNA + S-adenosyl-L-homocysteine + H(+). Functionally, catalyzes the 2'-O-methylation at nucleotide C2498 in 23S rRNA. The sequence is that of Ribosomal RNA large subunit methyltransferase M from Aliivibrio fischeri (strain MJ11) (Vibrio fischeri).